The chain runs to 848 residues: Paramyosin (848 aa).

Residues alanine 1–aspartate 9 are nonhelical region. A coiled-coil region spans residues leucine 10–serine 833. The nonhelical region stretch occupies residues valine 834–leucine 848.

The protein belongs to the paramyosin family. As to quaternary structure, homodimer.

It localises to the cytoplasm. It is found in the myofibril. Its function is as follows. Paramyosin is a major structural component of many thick filaments isolated from invertebrate muscles. The sequence is that of Paramyosin from Dirofilaria immitis (Canine heartworm).